Here is an 85-residue protein sequence, read N- to C-terminus: Small ribosomal subunit protein bS16c (85 aa).

It belongs to the bacterial ribosomal protein bS16 family.

It is found in the plastid. Its subcellular location is the chloroplast. The polypeptide is Small ribosomal subunit protein bS16c (Saccharum hybrid (Sugarcane)).